We begin with the raw amino-acid sequence, 233 residues long: AA9 family lytic polysaccharide monooxygenase A (233 aa).

The N-terminal stretch at 1 to 17 (MKLTTSVALLAAAGAQA) is a signal peptide. Positions 18 and 90 each coordinate Cu(2+). Disulfide bonds link Cys59–Cys180 and Cys150–Cys233. Asn132 carries an N-linked (GlcNAc...) asparagine glycan. Residues His166 and Gln175 each contribute to the O2 site. Tyr177 contributes to the Cu(2+) binding site.

Belongs to the polysaccharide monooxygenase AA9 family. Requires Cu(2+) as cofactor.

It is found in the secreted. It carries out the reaction [(1-&gt;4)-beta-D-glucosyl]n+m + reduced acceptor + O2 = 4-dehydro-beta-D-glucosyl-[(1-&gt;4)-beta-D-glucosyl]n-1 + [(1-&gt;4)-beta-D-glucosyl]m + acceptor + H2O.. Functionally, lytic polysaccharide monooxygenase (LPMO) that depolymerizes crystalline and amorphous polysaccharides via the oxidation of scissile alpha- or beta-(1-4)-glycosidic bonds, yielding C1 and C4 oxidation products. Catalysis by LPMOs requires the reduction of the active-site copper from Cu(II) to Cu(I) by a reducing agent and H(2)O(2) or O(2) as a cosubstrate. Shows endoglucanase activity on tamarind xyloglucan, as well as on beechwood xylan when combined with phosphoric acid swollen cellulose (PASC). Shows no activity on wheat arabinoxylan, konjac glucomannan, acetylated spruce galactoglucomannan, or cellopentaose. The sequence is that of AA9 family lytic polysaccharide monooxygenase A from Thermothielavioides terrestris (strain ATCC 38088 / NRRL 8126) (Thielavia terrestris).